The following is a 137-amino-acid chain: Acidic phospholipase A2 PL-I (137 aa).

An N-terminal signal peptide occupies residues 1–17; it reads AVCVSLLGASSIRPLPL. 7 disulfides stabilise this stretch: C28–C89, C44–C136, C46–C62, C61–C117, C68–C110, C78–C103, and C96–C108. Residues Y45, G47, and G49 each coordinate Ca(2+). H65 is an active-site residue. Residue D66 coordinates Ca(2+). Residue D111 is part of the active site.

The cofactor is Ca(2+). As to expression, expressed by the venom gland.

Its subcellular location is the secreted. The catalysed reaction is a 1,2-diacyl-sn-glycero-3-phosphocholine + H2O = a 1-acyl-sn-glycero-3-phosphocholine + a fatty acid + H(+). In terms of biological role, snake venom phospholipase A2 (PLA2) that may act in the hemostasis system of the prey. Exhibits hydrolytic activities, and prefers the anionic micelles (dPPC with deoxycholate) (793 umol/mg/min) to the zwitterionic micelles (dPPC with Triton X-100) (591 umol/mg/min). PLA2 catalyzes the calcium-dependent hydrolysis of the 2-acyl groups in 3-sn-phosphoglycerides. In Walterinnesia aegyptia (Desert black snake), this protein is Acidic phospholipase A2 PL-I.